A 554-amino-acid polypeptide reads, in one-letter code: NADH-quinone oxidoreductase subunit N 3 (554 aa).

14 consecutive transmembrane segments (helical) span residues 35-55 (LMPV…EAFV), 65-85 (LFLT…LAAG), 105-125 (PTLF…FTFA), 161-181 (GFTT…LLVF), 187-207 (LLTL…LCAV), 222-242 (YFLL…LLYG), 275-295 (ALLL…VGAV), 322-342 (VAAF…LAWD), 345-365 (PVMW…AITQ), 371-391 (LLAY…IAAS), 398-418 (VLFY…VVTL), 442-462 (VAAV…TSGF), 476-496 (GAGA…FFYI), and 525-545 (IAVG…FLDL).

It belongs to the complex I subunit 2 family. NDH-1 is composed of 14 different subunits. Subunits NuoA, H, J, K, L, M, N constitute the membrane sector of the complex.

The protein localises to the cell membrane. The catalysed reaction is a quinone + NADH + 5 H(+)(in) = a quinol + NAD(+) + 4 H(+)(out). In terms of biological role, NDH-1 shuttles electrons from NADH, via FMN and iron-sulfur (Fe-S) centers, to quinones in the respiratory chain. The immediate electron acceptor for the enzyme in this species is believed to be a menaquinone. Couples the redox reaction to proton translocation (for every two electrons transferred, four hydrogen ions are translocated across the cytoplasmic membrane), and thus conserves the redox energy in a proton gradient. The chain is NADH-quinone oxidoreductase subunit N 3 from Streptomyces griseus subsp. griseus (strain JCM 4626 / CBS 651.72 / NBRC 13350 / KCC S-0626 / ISP 5235).